We begin with the raw amino-acid sequence, 235 residues long: Small ribosomal subunit protein uS5 (235 aa).

Residues 60-123 (ENQEVLDIAL…NYAKMNIIEI (64 aa)) form the S5 DRBM domain. Zn(2+)-binding residues include cysteine 127, cysteine 132, cysteine 134, and histidine 138.

It belongs to the universal ribosomal protein uS5 family. Part of the 30S ribosomal subunit. Contacts protein S4. It depends on Zn(2+) as a cofactor.

Functionally, with S4 and S12 plays an important role in translational accuracy. The chain is Small ribosomal subunit protein uS5 from Thermococcus kodakarensis (strain ATCC BAA-918 / JCM 12380 / KOD1) (Pyrococcus kodakaraensis (strain KOD1)).